We begin with the raw amino-acid sequence, 202 residues long: Transcriptional regulator GfcR 2 (202 aa).

The protein belongs to the purine/pyrimidine phosphoribosyltransferase family. GfcR subfamily.

The sequence is that of Transcriptional regulator GfcR 2 from Methanosarcina barkeri (strain Fusaro / DSM 804).